Here is an 879-residue protein sequence, read N- to C-terminus: MKEEAFLRRRFSLCPPSSTPQKVDPRKLTRNLLLSGDNELYPLSPGKDMEPNGPSLPRDEGPPTPSSATKVPPAEYRLCNGSDKECVSPTARVTKKETLKAQKENYRQEKKRATRQLLSALTDPSVVIMADSLKIRGTLKSWTKLWCVLKPGVLLIYKTPKVGQWVGTVLLHCCELIERPSKKDGFCFKLFHPLDQSVWAVKGPKGESVGSITQPLPSSYLIFRAASESDGRCWLDALELALRCSSLLRLGTCKPGRDGEPGTSPDASPSSLCGLPASATVHPDQDLFPLNGSSLENDAFSDKSERENPEESDTETQDHSRKTESGSDQSETPGAPVRRGTTYVEQVQEELGELGEASQVETVSEENKSLMWTLLKQLRPGMDLSRVVLPTFVLEPRSFLNKLSDYYYHADLLSRAAVEEDAYSRMKLVLRWYLSGFYKKPKGIKKPYNPILGETFRCCWFHPQTDSRTFYIAEQVSHHPPVSAFHVSNRKDGFCISGSITAKSRFYGNSLSALLDGKATLTFLNRAEDYTLTMPYAHCKGILYGTMTLELGGKVTIECAKNNFQAQLEFKLKPFFGGSTSINQISGKITSGEEVLASLSGHWDRDVFIKEEGSGSSALFWTPSGEVRRQRLRQHTVPLEEQTELESERLWQHVTRAISKGDQHRATQEKFALEEAQRQRARERQESLMPWKPQLFHLDPITQEWHYRYEDHSPWDPLKDIAQFEQDGILRTLQQEAVARQTTFLGSPGPRHERSGPDQRLRKASDQPSGHSQATESSGSTPESCPELSDEEQDGDFVPGGESPCPRCRKEARRLQALHEAILSIREAQQELHRHLSAMLSSTARAAQAPTPGLLQSPRSWFLLCVFLACQLFINHILK.

Positions 1-73 (MKEEAFLRRR…TPSSATKVPP (73 aa)) are disordered. Residue S12 is modified to Phosphoserine. Residues 93 to 123 (VTKKETLKAQKENYRQEKKRATRQLLSALTD) adopt a coiled-coil conformation. The PH domain maps to 126-243 (VVIMADSLKI…WLDALELALR (118 aa)). Positions 254–341 (KPGRDGEPGT…TPGAPVRRGT (88 aa)) are disordered. Composition is skewed to basic and acidic residues over residues 300–309 (FSDKSERENP) and 316–325 (TQDHSRKTES). A 1,2-diacyl-sn-glycero-3-phospho-(1D-myo-inositol 4-phosphate)-binding positions include 384-389 (LSRVVL), 446-449 (KPYN), and 478-479 (HH). A 1,2-diacyl-sn-glycero-3-phospho-L-serine is bound by residues 384–389 (LSRVVL) and N449. Position 504 (S504) interacts with a 1,2-diacyl-sn-glycero-3-phospho-L-serine. K670, E674, and R678 together coordinate a 1,2-diacyl-sn-glycero-3-phospho-(1D-myo-inositol 4-phosphate). The disordered stretch occupies residues 742-806 (TTFLGSPGPR…FVPGGESPCP (65 aa)). S747 is modified (phosphoserine). Positions 750-765 (PRHERSGPDQRLRKAS) are enriched in basic and acidic residues. The span at 766-783 (DQPSGHSQATESSGSTPE) shows a compositional bias: polar residues. Residues 860–878 (SWFLLCVFLACQLFINHIL) traverse the membrane as a helical segment.

This sequence belongs to the OSBP family. In terms of tissue distribution, ubiquitously expressed.

Its subcellular location is the endoplasmic reticulum membrane. Its function is as follows. Lipid transporter involved in lipid countertransport between the endoplasmic reticulum and the plasma membrane: specifically exchanges phosphatidylserine with phosphatidylinositol 4-phosphate (PI4P), delivering phosphatidylserine to the plasma membrane in exchange for PI4P, which is degraded by the SAC1/SACM1L phosphatase in the endoplasmic reticulum. Binds phosphatidylserine and PI4P in a mutually exclusive manner. May cooperate with NPC1 to mediate the exit of cholesterol from endosomes/lysosomes. Binds 25-hydroxycholesterol and cholesterol. This Homo sapiens (Human) protein is Oxysterol-binding protein-related protein 5 (OSBPL5).